The following is a 1312-amino-acid chain: Cyclic GMP-binding protein D (1312 aa).

Residues 26–155 (GFSAIKSCSL…EFFKAKKMAR (130 aa)) form the N-terminal Ras-GEF domain. 2 stretches are compositionally biased toward low complexity: residues 206 to 236 (NTMNGINGTSNNNVNSNNNNNNGTTNISSPN) and 275 to 296 (NGTSPQSSPSSTLSSTNSLFNQ). Disordered stretches follow at residues 206 to 244 (NTMNGINGTSNNNVNSNNNNNNGTTNISSPNFDPSRSSM) and 260 to 326 (NFNN…NNVN). The segment covering 297-310 (QPSLSMLNDDGSVQ) has biased composition (polar residues). Low complexity predominate over residues 311–326 (NNNNNNNNNNNNNNVN). Positions 353–582 (LPEAIAKELT…FRLSKIREET (230 aa)) constitute a Ras-GEF domain. The interval 586-658 (QSLKESNGIG…NCGNGSGISS (73 aa)) is disordered. The span at 591 to 612 (SNGIGNSNSTSGGSSSSLVNKD) shows a compositional bias: low complexity. The span at 613–625 (GSGGGGGSGGGGS) shows a compositional bias: gly residues. Residues 630-644 (GDGKGDGKDNRDGRG) are compositionally biased toward basic and acidic residues. Low complexity predominate over residues 646–657 (GNSNCGNGSGIS). 698–857 (VSSTLSEREW…ATFYKFIGVI (160 aa)) serves as a coordination point for a nucleoside 3',5'-cyclic phosphate. In terms of domain architecture, GRAM spans 940–1006 (SSFRTKFGLS…DKILTVDKNI (67 aa)). Over residues 1059 to 1087 (QQQQPSQQPSQQQSQSSQLQQSVSASSTT) the composition is skewed to low complexity. 2 disordered regions span residues 1059–1108 (QQQQ…IKDL) and 1167–1210 (NNIN…NSSI). Residues 1105 to 1218 (IKDL…SNTS) and 1182 to 1303 (NNNN…LACV) each bind a nucleoside 3',5'-cyclic phosphate.

In terms of biological role, promotes the exchange of Ras-bound GDP by GTP. Induces the formation of substrate-attached pseudopodia, that leads to increased adhesion and thereby negatively influencing cell speed and polarity. In Dictyostelium discoideum (Social amoeba), this protein is Cyclic GMP-binding protein D (gbpD).